We begin with the raw amino-acid sequence, 578 residues long: Telomere repeat-binding protein 1 (578 aa).

The region spanning 293–372 is the Ubiquitin-like domain; that stretch reads VKLRIKSFRV…HLDSLDFSLE (80 aa). Residues 440–467 are disordered; the sequence is ELSSQSQPPSRKSRRSEQQQQQAAQRRI. The 60-residue stretch at 463-522 folds into the HTH myb-type domain; the sequence is AQRRIRRPFSVAEVEALVQAVEKLGTGRWRDVKLCAFEDADHRTYVDLKDKWKTLVHTAK. Interaction with DNA stretches follow at residues 465–469, 511–515, and 522–529; these read RRIRR, KDKWK, and KISPQQRR. A DNA-binding region (H-T-H motif) is located at residues 491–518; that stretch reads WRDVKLCAFEDADHRTYVDLKDKWKTLV.

As to quaternary structure, homodimer and heterodimer with TRP2 and TRP3. Interacts with KU70. In terms of tissue distribution, expressed ubiquitously. Highest expression in flowers and leaves.

It localises to the nucleus. Its function is as follows. Binds specifically to the plant telomeric double-stranded DNA sequences 5'-GGTTTAG-3'. At least 4 repeats of telomeric sequences are required for binding. Induces DNA bending. The chain is Telomere repeat-binding protein 1 (TRP1) from Arabidopsis thaliana (Mouse-ear cress).